We begin with the raw amino-acid sequence, 225 residues long: NAD(P)H-quinone oxidoreductase subunit K, chloroplastic (225 aa).

[4Fe-4S] cluster contacts are provided by Cys43, Cys44, Cys108, and Cys139.

The protein belongs to the complex I 20 kDa subunit family. NDH is composed of at least 16 different subunits, 5 of which are encoded in the nucleus. [4Fe-4S] cluster is required as a cofactor.

It localises to the plastid. The protein localises to the chloroplast thylakoid membrane. The catalysed reaction is a plastoquinone + NADH + (n+1) H(+)(in) = a plastoquinol + NAD(+) + n H(+)(out). It catalyses the reaction a plastoquinone + NADPH + (n+1) H(+)(in) = a plastoquinol + NADP(+) + n H(+)(out). In terms of biological role, NDH shuttles electrons from NAD(P)H:plastoquinone, via FMN and iron-sulfur (Fe-S) centers, to quinones in the photosynthetic chain and possibly in a chloroplast respiratory chain. The immediate electron acceptor for the enzyme in this species is believed to be plastoquinone. Couples the redox reaction to proton translocation, and thus conserves the redox energy in a proton gradient. The chain is NAD(P)H-quinone oxidoreductase subunit K, chloroplastic from Amborella trichopoda.